A 474-amino-acid polypeptide reads, in one-letter code: 6-phospho-beta-galactosidase (474 aa).

D-galactose 6-phosphate-binding residues include Q18, H115, N159, E160, and N296. E160 (proton donor) is an active-site residue. The Nucleophile role is filled by E374. D-galactose 6-phosphate is bound by residues S427, W428, K434, and Y436.

It belongs to the glycosyl hydrolase 1 family.

It carries out the reaction a 6-phospho-beta-D-galactoside + H2O = D-galactose 6-phosphate + an alcohol. It functions in the pathway carbohydrate metabolism; lactose degradation; D-galactose 6-phosphate and beta-D-glucose from lactose 6-phosphate: step 1/1. The chain is 6-phospho-beta-galactosidase from Clostridium acetobutylicum (strain ATCC 824 / DSM 792 / JCM 1419 / IAM 19013 / LMG 5710 / NBRC 13948 / NRRL B-527 / VKM B-1787 / 2291 / W).